Reading from the N-terminus, the 837-residue chain is Thioredoxin domain-containing protein 3 homolog (837 aa).

A Thioredoxin domain is found at 6–115 (EQIQLQKEIL…LKNVERELKQ (110 aa)). Cysteines 39 and 42 form a disulfide. NDK stretches follow at residues 201-345 (KEVT…SVPI), 355-491 (IEKT…FPKQ), and 493-629 (TLAV…EVLP). A disordered region spans residues 633–837 (VKDSVASISM…EEKTEEQTAS (205 aa)). The segment covering 638–647 (ASISMEQSQV) has biased composition (polar residues). The span at 652–670 (EEGGEEQTEQPAGEGEEQQ) shows a compositional bias: acidic residues. 3 stretches are compositionally biased toward low complexity: residues 671–707 (AEQP…PPAE), 718–752 (QQTQ…AEQT), and 766–787 (APAT…QQTQ). Over residues 805 to 819 (AGGGEEAVATEGGGE) the composition is skewed to gly residues. Over residues 820-837 (GDAKPEGGEEKTEEQTAS) the composition is skewed to basic and acidic residues.

This sequence in the C-terminal section; belongs to the NDK family. In terms of assembly, monomer. As to expression, testis-specific. In sperm, it is a component of the arm dynein of sperm axoneme.

Functionally, probably required during the final stages of sperm tail maturation in the testis and/or epididymis, where extensive disulfide bonding of fibrous sheath (FS) proteins occurs. In vitro, it has neither nucleoside diphosphate kinase (NDPK) activity nor reducing activity on disulfide bonds. Exhibits a 3'-5' exonuclease activity with a preference for single-stranded DNA, suggesting roles in DNA proofreading and repair. This Heliocidaris crassispina (Sea urchin) protein is Thioredoxin domain-containing protein 3 homolog (NME8).